The chain runs to 270 residues: Regulatory protein RecX (270 aa).

The protein belongs to the RecX family.

Its subcellular location is the cytoplasm. Modulates RecA activity. This Bacillus cereus (strain ZK / E33L) protein is Regulatory protein RecX.